The following is a 297-amino-acid chain: 5'-3' exonuclease (297 aa).

Residues 171–262 (EPDQIVDFKA…MKLEKELFAI (92 aa)) form the 5'-3' exonuclease domain.

In terms of biological role, 5'-3' exonuclease acting preferentially on double-stranded DNA. This Mycoplasmopsis pulmonis (strain UAB CTIP) (Mycoplasma pulmonis) protein is 5'-3' exonuclease (polA).